Here is a 407-residue protein sequence, read N- to C-terminus: 5-aminolevulinate synthase 2 (407 aa).

2 residues coordinate substrate: R21 and S137. Residues S189, H217, and T245 each coordinate pyridoxal 5'-phosphate. Residue K248 is part of the active site. N6-(pyridoxal phosphate)lysine is present on K248. Pyridoxal 5'-phosphate contacts are provided by T277 and T278. T363 is a substrate binding site.

It belongs to the class-II pyridoxal-phosphate-dependent aminotransferase family. As to quaternary structure, homodimer. The cofactor is pyridoxal 5'-phosphate.

It carries out the reaction succinyl-CoA + glycine + H(+) = 5-aminolevulinate + CO2 + CoA. The protein operates within porphyrin-containing compound metabolism; protoporphyrin-IX biosynthesis; 5-aminolevulinate from glycine: step 1/1. The protein is 5-aminolevulinate synthase 2 (hemT) of Cereibacter sphaeroides (strain ATCC 17023 / DSM 158 / JCM 6121 / CCUG 31486 / LMG 2827 / NBRC 12203 / NCIMB 8253 / ATH 2.4.1.) (Rhodobacter sphaeroides).